Consider the following 358-residue polypeptide: Carbamoyl phosphate synthase small chain (358 aa).

2 CPSase regions span residues 1-168 (MYNR…PALG) and 1-171 (MYNR…GRGR). L-glutamine-binding residues include Ser-46, Gly-220, and Gly-222. Residues 172–358 (RVVLVDLGMK…FIKNIDNNMK (187 aa)) enclose the Glutamine amidotransferase type-1 domain. Cys-247 serves as the catalytic Nucleophile. Met-248, Gln-251, Asn-289, Gly-291, and Tyr-292 together coordinate L-glutamine. Residues His-332 and Glu-334 contribute to the active site.

The protein belongs to the CarA family. In terms of assembly, composed of two chains; the small (or glutamine) chain promotes the hydrolysis of glutamine to ammonia, which is used by the large (or ammonia) chain to synthesize carbamoyl phosphate. Tetramer of heterodimers (alpha,beta)4.

The catalysed reaction is hydrogencarbonate + L-glutamine + 2 ATP + H2O = carbamoyl phosphate + L-glutamate + 2 ADP + phosphate + 2 H(+). It catalyses the reaction L-glutamine + H2O = L-glutamate + NH4(+). The protein operates within amino-acid biosynthesis; L-arginine biosynthesis; carbamoyl phosphate from bicarbonate: step 1/1. It functions in the pathway pyrimidine metabolism; UMP biosynthesis via de novo pathway; (S)-dihydroorotate from bicarbonate: step 1/3. Small subunit of the glutamine-dependent carbamoyl phosphate synthetase (CPSase). CPSase catalyzes the formation of carbamoyl phosphate from the ammonia moiety of glutamine, carbonate, and phosphate donated by ATP, constituting the first step of 2 biosynthetic pathways, one leading to arginine and/or urea and the other to pyrimidine nucleotides. The small subunit (glutamine amidotransferase) binds and cleaves glutamine to supply the large subunit with the substrate ammonia. This Fusobacterium nucleatum subsp. nucleatum (strain ATCC 25586 / DSM 15643 / BCRC 10681 / CIP 101130 / JCM 8532 / KCTC 2640 / LMG 13131 / VPI 4355) protein is Carbamoyl phosphate synthase small chain.